Here is a 326-residue protein sequence, read N- to C-terminus: 4-hydroxythreonine-4-phosphate dehydrogenase (326 aa).

Substrate contacts are provided by His130 and Thr131. The a divalent metal cation site is built by His160, His205, and His260. The substrate site is built by Lys268, Asn277, and Arg286.

It belongs to the PdxA family. In terms of assembly, homodimer. Requires Zn(2+) as cofactor. Mg(2+) serves as cofactor. It depends on Co(2+) as a cofactor.

It localises to the cytoplasm. The enzyme catalyses 4-(phosphooxy)-L-threonine + NAD(+) = 3-amino-2-oxopropyl phosphate + CO2 + NADH. The protein operates within cofactor biosynthesis; pyridoxine 5'-phosphate biosynthesis; pyridoxine 5'-phosphate from D-erythrose 4-phosphate: step 4/5. Its function is as follows. Catalyzes the NAD(P)-dependent oxidation of 4-(phosphooxy)-L-threonine (HTP) into 2-amino-3-oxo-4-(phosphooxy)butyric acid which spontaneously decarboxylates to form 3-amino-2-oxopropyl phosphate (AHAP). The sequence is that of 4-hydroxythreonine-4-phosphate dehydrogenase from Aromatoleum aromaticum (strain DSM 19018 / LMG 30748 / EbN1) (Azoarcus sp. (strain EbN1)).